The following is a 275-amino-acid chain: Vitamin B12-binding protein (275 aa).

A signal peptide spans 1 to 19 (MMNKICLYLPLFFSSLTMA). The 248-residue stretch at 25 to 272 (RVISLAPHAT…EVCEHFESVK (248 aa)) folds into the Fe/B12 periplasmic-binding domain. Cysteine 185 and cysteine 265 form a disulfide bridge.

This sequence belongs to the BtuF family. The complex is composed of two ATP-binding proteins (BtuD), two transmembrane proteins (BtuC) and a solute-binding protein (BtuF).

It localises to the periplasm. Functionally, part of the ABC transporter complex BtuCDF involved in vitamin B12 import. Binds vitamin B12 and delivers it to the periplasmic surface of BtuC. The protein is Vitamin B12-binding protein of Vibrio parahaemolyticus serotype O3:K6 (strain RIMD 2210633).